A 489-amino-acid chain; its full sequence is Diaminopimelate decarboxylase 2, chloroplastic (489 aa).

The transit peptide at 1 to 50 (MAAVTQFLSQPSSIRGTLNQYQLNQTSLSRIPFLSLKSTLKPLKRLSVKA) directs the protein to the chloroplast. Ala51 carries the post-translational modification N-acetylalanine. Lys130 is subject to N6-(pyridoxal phosphate)lysine. Pyridoxal 5'-phosphate is bound by residues Gly309 and 345–348 (EPGR). Positions 348, 384, and 388 each coordinate substrate. Cys416 acts as the Proton donor in catalysis. Substrate is bound by residues Glu417 and Tyr445. Position 445 (Tyr445) interacts with pyridoxal 5'-phosphate.

The protein belongs to the Orn/Lys/Arg decarboxylase class-II family. LysA subfamily. Homodimer. Pyridoxal 5'-phosphate serves as cofactor.

Its subcellular location is the plastid. The protein resides in the chloroplast. It carries out the reaction meso-2,6-diaminopimelate + H(+) = L-lysine + CO2. It participates in amino-acid biosynthesis; L-lysine biosynthesis via DAP pathway; L-lysine from DL-2,6-diaminopimelate: step 1/1. In terms of biological role, specifically catalyzes the decarboxylation of meso-diaminopimelate (meso-DAP) to L-lysine. The protein is Diaminopimelate decarboxylase 2, chloroplastic (LYSA2) of Arabidopsis thaliana (Mouse-ear cress).